A 386-amino-acid polypeptide reads, in one-letter code: Circumsporozoite protein (386 aa).

Positions 1 to 22 are cleaved as a signal peptide; the sequence is MKNFILLAVSSILLVDLFPTHC. The segment at 51–304 is disordered; that stretch reads HVGQSASRGR…NEGANAPNEK (254 aa). A compositionally biased stretch (basic and acidic residues) spans 72–100; it reads DAKKKKDGKKAEPKNPRENKLKQPGDRAD. A required for the binding to heparan sulfate proteoglycans (HSPGs) on the surface of host hepatocytes region spans residues 80-88; the sequence is KKAEPKNPR. The region I; contains the proteolytic cleavage site stretch occupies residues 91–95; sequence KLKQP. 20 tandem repeats follow at residues 96-104, 105-113, 114-122, 123-131, 132-140, 141-149, 150-158, 159-167, 168-176, 177-185, 186-194, 195-203, 204-212, 213-221, 222-230, 231-239, 240-248, 249-257, 258-266, and 267-275. Residues 96–275 are 20 X 9 AA tandem repeats of G-D-R-A-[AD]-G-Q-P-A; the sequence is GDRADGQPAG…AGDRAAGQPA (180 aa). The segment covering 275–292 has biased composition (gly residues); sequence AGNGAGGQAAGGNAGGQG. Residues 293–303 are compositionally biased toward low complexity; sequence QNNEGANAPNE. One can recognise a TSP type-1 domain in the interval 312 to 364; the sequence is KVRATVGTEWTPCSVTCGVGVRVRRRVNAANKKPEDLTLNDLETDVCTMDKCA. Disulfide bonds link C324-C358 and C328-C363. Residue T327 is glycosylated (O-linked (Fuc) threonine). C363 is lipidated: GPI-anchor amidated cysteine. Positions 364 to 386 are cleaved as a propeptide — removed in mature form; sequence AGIFNVVSNSLGLVILLVLALFN.

This sequence belongs to the plasmodium circumsporozoite protein family. Post-translationally, during host cell invasion, proteolytically cleaved at the cell membrane in the region I by a papain-like cysteine protease of parasite origin. Cleavage is triggered by the sporozoite contact with highly sulfated heparan sulfate proteoglycans (HSPGs) present on the host hepatocyte cell surface. Cleavage exposes the TSP type-1 (TSR) domain and is required for productive invasion of host hepatocytes but not for adhesion to the host cell membrane. Cleavage is dispensable for sporozoite development in the oocyst, motility and for traversal of host and vector cells. O-glycosylated; maybe by POFUT2.

The protein localises to the cell membrane. Its subcellular location is the cytoplasm. Essential sporozoite protein. In the mosquito vector, required for sporozoite development in the oocyst, migration through the vector hemolymph and entry into the vector salivary glands. In the vertebrate host, required for sporozoite migration through the host dermis and infection of host hepatocytes. Binds to highly sulfated heparan sulfate proteoglycans (HSPGs) on the surface of host hepatocytes. Functionally, in the vertebrate host, binds to highly sulfated heparan sulfate proteoglycans (HSPGs) on the surface of host hepatocytes and is required for sporozoite invasion of the host hepatocytes. This chain is Circumsporozoite protein, found in Plasmodium simium.